The primary structure comprises 440 residues: 23S rRNA (uracil(1939)-C(5))-methyltransferase RlmD (440 aa).

The TRAM domain occupies 10-68 (KALPTQAVEITIDNLDHHLTGVGRYQGKACFVEGVLPGEKVSVQITEQKKQYAHARLRQ). Cys81, Cys87, Cys90, and Cys169 together coordinate [4Fe-4S] cluster. Positions 272, 301, 306, 322, 349, and 372 each coordinate S-adenosyl-L-methionine. Catalysis depends on Cys398, which acts as the Nucleophile.

This sequence belongs to the class I-like SAM-binding methyltransferase superfamily. RNA M5U methyltransferase family. RlmD subfamily.

It carries out the reaction uridine(1939) in 23S rRNA + S-adenosyl-L-methionine = 5-methyluridine(1939) in 23S rRNA + S-adenosyl-L-homocysteine + H(+). Catalyzes the formation of 5-methyl-uridine at position 1939 (m5U1939) in 23S rRNA. This is 23S rRNA (uracil(1939)-C(5))-methyltransferase RlmD from Tolumonas auensis (strain DSM 9187 / NBRC 110442 / TA 4).